A 302-amino-acid polypeptide reads, in one-letter code: Ornithine carbamoyltransferase (302 aa).

Carbamoyl phosphate is bound by residues 47–50 (STRT), Gln-74, Arg-98, and 125–128 (HPCQ). L-ornithine contacts are provided by residues Asn-156, Asp-220, and 224–225 (SM). Carbamoyl phosphate-binding positions include 260–261 (CL) and Arg-288.

This sequence belongs to the aspartate/ornithine carbamoyltransferase superfamily. OTCase family.

The protein resides in the cytoplasm. It carries out the reaction carbamoyl phosphate + L-ornithine = L-citrulline + phosphate + H(+). It participates in amino-acid biosynthesis; L-arginine biosynthesis; L-arginine from L-ornithine and carbamoyl phosphate: step 1/3. Functionally, reversibly catalyzes the transfer of the carbamoyl group from carbamoyl phosphate (CP) to the N(epsilon) atom of ornithine (ORN) to produce L-citrulline. The chain is Ornithine carbamoyltransferase from Methanosphaera stadtmanae (strain ATCC 43021 / DSM 3091 / JCM 11832 / MCB-3).